The primary structure comprises 129 residues: Small ribosomal subunit protein uS11 (129 aa).

Belongs to the universal ribosomal protein uS11 family. In terms of assembly, part of the 30S ribosomal subunit. Interacts with proteins S7 and S18. Binds to IF-3.

Functionally, located on the platform of the 30S subunit, it bridges several disparate RNA helices of the 16S rRNA. Forms part of the Shine-Dalgarno cleft in the 70S ribosome. The polypeptide is Small ribosomal subunit protein uS11 (Lactobacillus delbrueckii subsp. bulgaricus (strain ATCC 11842 / DSM 20081 / BCRC 10696 / JCM 1002 / NBRC 13953 / NCIMB 11778 / NCTC 12712 / WDCM 00102 / Lb 14)).